A 160-amino-acid chain; its full sequence is M-phase phosphoprotein 6 (160 aa).

Residues lysine 37 and lysine 86 each participate in a glycyl lysine isopeptide (Lys-Gly) (interchain with G-Cter in SUMO2) cross-link. At serine 110 the chain carries Phosphoserine. The Nuclear localization signal signature appears at 116–133; sequence RRYETLVGTIGKKFARKR. Lysine 127 is covalently cross-linked (Glycyl lysine isopeptide (Lys-Gly) (interchain with G-Cter in SUMO2)). Position 147 is a phosphothreonine (threonine 147). Glycyl lysine isopeptide (Lys-Gly) (interchain with G-Cter in SUMO2) cross-links involve residues lysine 150 and lysine 153.

This sequence belongs to the MPP6 family. Associates with the RNA exosome complex, mediated by EXOSC3. Interacts with ARHGAP18. Interacts with exosome cofactors EXOSC10 and MTREX. Post-translationally, phosphorylated in M (mitotic) phase.

The protein localises to the nucleus. The protein resides in the nucleolus. Its subcellular location is the cytoplasm. Functionally, RNA-binding protein that associates with the RNA exosome complex. Involved in the 3'-processing of the 7S pre-RNA to the mature 5.8S rRNA and play a role in recruiting the RNA exosome complex to pre-rRNA; this function may include C1D. The chain is M-phase phosphoprotein 6 from Homo sapiens (Human).